An 81-amino-acid chain; its full sequence is Small ribosomal subunit protein bS16 (81 aa).

Belongs to the bacterial ribosomal protein bS16 family.

The protein is Small ribosomal subunit protein bS16 of Neisseria meningitidis serogroup C (strain 053442).